Consider the following 155-residue polypeptide: Protein FAM201A (155 aa).

The interval 130–155 is disordered; the sequence is QDQGCGQHRPHSPRLVDIALPGGGWT.

The sequence is that of Protein FAM201A (FAM201A) from Homo sapiens (Human).